The sequence spans 34 residues: Beta-theraphotoxin-Pmu1a (34 aa).

Cystine bridges form between Cys3-Cys18, Cys10-Cys23, and Cys17-Cys30. At Leu34 the chain carries Leucine amide.

Belongs to the neurotoxin 10 (Hwtx-1) family. 34 (Jztx-26) subfamily. In terms of tissue distribution, expressed by the venom gland.

The protein localises to the secreted. Its function is as follows. Spider venom neurotoxin that blocks voltage-gated sodium channels Nav1.3/SCN3A and Nav1.8/SCN10A in human (IC(50)=2 uM and IC(50)=4 uM, respectively) and rat (IC(50)=2 uM and IC(50)=2.5 uM, respectively). The sequence is that of Beta-theraphotoxin-Pmu1a from Pterinochilus murinus (Mombasa golden starburst baboon spider).